The chain runs to 1086 residues: Phosphinothricin tripeptide synthetase PhsC (1086 aa).

The interval arginine 22–glycine 43 is disordered. The tract at residues valine 45–aspartate 484 is condensation. The interval leucine 510–arginine 901 is adenylation. The interval glycine 983 to leucine 1007 is disordered. Positions proline 1006–arginine 1081 constitute a Carrier domain. Serine 1041 carries the post-translational modification O-(pantetheine 4'-phosphoryl)serine.

The protein belongs to the NRP synthetase family. Pantetheine 4'-phosphate is required as a cofactor.

It carries out the reaction holo-[peptidyl-carrier protein] + L-alanine + ATP = L-alanyl-[peptidyl-carrier protein] + AMP + diphosphate. The protein operates within secondary metabolite biosynthesis; bialaphos biosynthesis. Functionally, involved in the biosynthesis of phosphinothricin tripeptide (PTT), also known as bialaphos (BA), a natural-product antibiotic and potent herbicide. Adenylates L-alanine and loads it onto a peptidyl carrier domain via a thioester linkage to the phosphopanthetheine moiety. Shows weaker activity with aminobutyric acid and L-serine. This chain is Phosphinothricin tripeptide synthetase PhsC, found in Streptomyces viridochromogenes (strain DSM 40736 / JCM 4977 / BCRC 1201 / Tue 494).